The primary structure comprises 214 residues: Probable transaldolase (214 aa).

The active-site Schiff-base intermediate with substrate is Lys-83.

Belongs to the transaldolase family. Type 3B subfamily.

It is found in the cytoplasm. It catalyses the reaction D-sedoheptulose 7-phosphate + D-glyceraldehyde 3-phosphate = D-erythrose 4-phosphate + beta-D-fructose 6-phosphate. It participates in carbohydrate degradation; pentose phosphate pathway; D-glyceraldehyde 3-phosphate and beta-D-fructose 6-phosphate from D-ribose 5-phosphate and D-xylulose 5-phosphate (non-oxidative stage): step 2/3. Its function is as follows. Transaldolase is important for the balance of metabolites in the pentose-phosphate pathway. The sequence is that of Probable transaldolase from Clostridium botulinum (strain Alaska E43 / Type E3).